The chain runs to 407 residues: Putative aspartate aminotransferase, cytoplasmic 2 (407 aa).

An N6-(pyridoxal phosphate)lysine modification is found at Lys249.

This sequence belongs to the class-I pyridoxal-phosphate-dependent aminotransferase family. In terms of assembly, homodimer. It depends on pyridoxal 5'-phosphate as a cofactor.

It localises to the cytoplasm. It carries out the reaction L-aspartate + 2-oxoglutarate = oxaloacetate + L-glutamate. In Bos taurus (Bovine), this protein is Putative aspartate aminotransferase, cytoplasmic 2 (GOT1L1).